A 505-amino-acid chain; its full sequence is MLEIRGLSPSLCLLSLLLVLHGAERSQPPPRRRFEYKLSFKGPRLAVPGAGIPFWSHHGDAILGLEEVRLVPSMKNRSGAVWSNISVSFPSWEVEMQMRVTGPGRRGAQGVAMWYTKDRAQVGSVVEELASWDGIGIYFDSSTSDVQDSPVIRVLASDGHDLQEQSGDGNVRELGSCHRDFRNRPFPFRARVTYWRQRLRVSLSGGLTPKDPEEVCVDVEPLFLAPGGFFGVSAATGTLAADDHDVLSFLTFSLREPGPEETPQPFMEKDQLLLARKLEELKARLALGTREASIPPLNPKAQEEGERFFNLEDTLGRQSQILQALQALSRQMAQAEKHWKQQLGSTVQVRPEGGWNTAKVSTLLYGQRTLIQALQEMREAAARMASGAHVFYLPVGTKHHFFELDHILSLLQKDLRGLVKKTAKAPRPSGWLLGSSTCLHTSIFLFFLLLQTVGFFCYVNFSRQELDKRLQEYLSTGSLSLEPALPITRTIGVLRRQPISPSMQA.

Residues 1–25 form the signal peptide; sequence MLEIRGLSPSLCLLSLLLVLHGAER. Topologically, residues 26–438 are lumenal; it reads SQPPPRRRFE…SGWLLGSSTC (413 aa). The region spanning 32–254 is the L-type lectin-like domain; it reads RRFEYKLSFK…DVLSFLTFSL (223 aa). Asparagine 84 carries an N-linked (GlcNAc...) asparagine glycan. Cysteines 177 and 216 form a disulfide. Residues 439-459 form a helical membrane-spanning segment; sequence LHTSIFLFFLLLQTVGFFCYV. Topologically, residues 460 to 505 are cytoplasmic; sequence NFSRQELDKRLQEYLSTGSLSLEPALPITRTIGVLRRQPISPSMQA.

It is found in the endoplasmic reticulum-Golgi intermediate compartment membrane. In Mus musculus (Mouse), this protein is Protein ERGIC-53-like (Lman1l).